We begin with the raw amino-acid sequence, 1247 residues long: Structural polyprotein (1247 aa).

The tract at residues 52-103 (ALRTVPQKPRRTRKTKKQKQVKQEQQSTRNQKKKAPKQKQTQKKKRPGRRER) is disordered. 2 stretches are compositionally biased toward basic residues: residues 59–71 (KPRR…KQKQ) and 81–100 (NQKK…RPGR). Residues 86–99 (APKQKQTQKKKRPG) are ribosome-binding. An intrachain disulfide couples Cys112 to Cys127. Residues 112–260 (CIFEVKHEGK…KITPEGSVEW (149 aa)) enclose the Peptidase S3 domain. Residue His138 is the Charge relay system of the active site. Positions 154–159 (KRSSKY) are interaction with spike glycoprotein E2. Active-site charge relay system residues include Asp160 and Ser212. The tract at residues 261-273 (SLALPVMCLLANT) is functions as an uncleaved signal peptide for the precursor of protein E3/E2. Disulfide bonds link Cys268–Cys277, Cys282–Cys286, Cys285–Cys317, Cys343–Cys449, Cys346–Cys352, Cys415–Cys429, Cys477–Cys590, Cys525–Cys549, and Cys527–Cys544. N-linked (GlcNAc...) asparagine; by host glycosylation occurs at Asn272. Topologically, residues 325–691 (NARENFNVYK…YYYELYPTTT (367 aa)) are extracellular. Asn587 carries N-linked (GlcNAc...) asparagine; by host glycosylation. The chain crosses the membrane as a helical span at residues 692–712 (IAVLAAASIVVASLVSLSLGM). Over 713 to 747 (CICARRRCITPYELTPGATIPFLLGVLCCVKTAKA) the chain is Cytoplasmic. Residues 715 to 719 (CARRR) form an interaction with the capsid protein region. S-palmitoyl cysteine; by host attachment occurs at residues Cys720, Cys740, and Cys741. The segment at 720–740 (CITPYELTPGATIPFLLGVLC) is transient transmembrane before p62-6K protein processing. Cys720 and Cys741 are disulfide-bonded. Residues 748–762 (ASYYEAATYLWNEQQ) are Extracellular-facing. Residues 763 to 783 (PLFWLQLLIPLSAAIVACNCL) form a helical membrane-spanning segment. Over 784–787 (KLLP) the chain is Cytoplasmic. The chain crosses the membrane as a helical span at residues 788–808 (CCCKTLTFLAVMSIGARTVSA). At 809–1223 (YEHATVIPNT…AMSWVQKITG (415 aa)) the chain is on the extracellular side. Cystine bridges form between Cys857-Cys922, Cys870-Cys902, Cys871-Cys904, and Cys876-Cys886. Residues 892-909 (VYPFMWGGAYCFCDAENT) form an E1 fusion peptide loop region. Residues Asn949 and Asn1078 are each glycosylated (N-linked (GlcNAc...) asparagine; by host). 4 disulfide bridges follow: Cys1067/Cys1079, Cys1109/Cys1184, Cys1114/Cys1188, and Cys1136/Cys1178. A helical membrane pass occupies residues 1224-1244 (GVGLVVAIAALILIIVLCVSF). Cys1241 carries S-palmitoyl cysteine; by host lipidation. The Cytoplasmic segment spans residues 1245-1247 (SRH).

As to quaternary structure, homodimer. Homomultimer. Interacts with host karyopherin KPNA4; this interaction allows the nuclear import of the viral capsid protein. Interacts with spike glycoprotein E2. Interacts with host IRAK1; the interaction leads to inhibition of IRAK1-dependent signaling. In terms of assembly, the precursor of protein E3/E2 and E1 form a heterodimer shortly after synthesis. The precursor of protein E3/E2 and E1 form a heterodimer shortly after synthesis. Processing of the precursor of protein E3/E2 into E2 and E3 results in a heterodimer of the spike glycoproteins E2 and E1. Spike at virion surface are constituted of three E2-E1 heterodimers. After target cell attachment and endocytosis, E1 change conformation to form homotrimers. Interacts with 6K protein. As to quaternary structure, interacts with spike glycoprotein E1. Processing of the precursor of protein E3/E2 into E2 and E3 results in a heterodimer of the spike glycoproteins E2 and E1. Spike at virion surface are constituted of a trimer of E2-E1 heterodimers. Interacts with 6K protein. Interacts with host MXRA8; this interaction mediates virus entry. In terms of assembly, oligomer. Interacts with spike glycoprotein E1. Interacts with spike glycoprotein E2. Post-translationally, structural polyprotein: Specific enzymatic cleavages in vivo yield mature proteins. Capsid protein is auto-cleaved during polyprotein translation, unmasking a signal peptide at the N-terminus of the precursor of E3/E2. The remaining polyprotein is then targeted to the host endoplasmic reticulum, where host signal peptidase cleaves it into pE2, 6K and E1 proteins. pE2 is further processed to mature E3 and E2 by host furin in trans-Golgi vesicle. Palmitoylated via thioester bonds. These palmitoylations may induce disruption of the C-terminus transmembrane. This would result in the reorientation of E2 C-terminus from lumenal to cytoplasmic side. In terms of processing, N-glycosylated. Post-translationally, palmitoylated via thioester bonds.

It is found in the virion. It localises to the host cytoplasm. Its subcellular location is the host cell membrane. The protein localises to the virion membrane. The protein resides in the host Golgi apparatus. It is found in the host trans-Golgi network. It localises to the host endoplasmic reticulum. The catalysed reaction is Autocatalytic release of the core protein from the N-terminus of the togavirus structural polyprotein by hydrolysis of a -Trp-|-Ser- bond.. Functionally, possesses a protease activity that results in its autocatalytic cleavage from the nascent structural protein. Following its self-cleavage, the capsid protein transiently associates with ribosomes, and within several minutes the protein binds to viral RNA and rapidly assembles into icosahedric core particles. The resulting nucleocapsid eventually associates with the cytoplasmic domain of the spike glycoprotein E2 at the cell membrane, leading to budding and formation of mature virions. In case of infection, new virions attach to target cells and after clathrin-mediated endocytosis their membrane fuses with the host endosomal membrane. This leads to the release of the nucleocapsid into the cytoplasm, followed by an uncoating event necessary for the genomic RNA to become accessible. The uncoating might be triggered by the interaction of capsid proteins with ribosomes. Binding of ribosomes would release the genomic RNA since the same region is genomic RNA-binding and ribosome-binding. Provides the signal sequence for the translocation of the precursor of protein E3/E2 to the host endoplasmic reticulum. Mediates pH protection of spike glycoprotein E1 during the transport via the secretory pathway. In terms of biological role, plays a role in viral attachment to target host cell, by binding to the cell receptor MXRA8. Synthesized as a p62 precursor which is processed by furin at the cell membrane just before virion budding, giving rise to E2-E1 heterodimer. The p62-E1 heterodimer is stable, whereas E2-E1 is unstable and dissociate at low pH. p62 is processed at the last step, presumably to avoid E1 fusion activation before its final export to cell surface. E2 C-terminus contains a transitory transmembrane that would be disrupted by palmitoylation, resulting in reorientation of the C-terminal tail from lumenal to cytoplasmic side. This step is critical since E2 C-terminus is involved in budding by interacting with capsid proteins. This release of E2 C-terminus in cytoplasm occurs lately in protein export, and precludes premature assembly of particles at the endoplasmic reticulum membrane. Its function is as follows. Acts as a viroporin that participates in virus glycoprotein processing and transport to the plasma membrane, cell permeabilization and budding of viral particles. Disrupts the calcium homeostasis of the cell, probably at the endoplasmic reticulum level. This leads to cytoplasmic calcium elevation. Because of its lipophilic properties, the 6K protein is postulated to influence the selection of lipids that interact with the transmembrane domains of the glycoproteins, which, in turn, affects the deformability of the bilayer required for the extreme curvature that occurs as budding proceeds. Present in low amount in virions, about 3% compared to viral glycoproteins. Functionally, class II viral fusion protein. Fusion activity is inactive as long as E1 is bound to E2 in mature virion. After virus attachment to target cell via host MXRA8 and endocytosis, acidification of the endosome induce dissociation of E1/E2 heterodimer and concomitant trimerization of the E1 subunits. This E1 trimer is fusion active, and promotes release of viral nucleocapsid in cytoplasm after endosome and viral membrane fusion. Efficient fusion requires the presence of cholesterol and sphingolipid in the target membrane. The polypeptide is Structural polyprotein (O'nyong-nyong virus (strain SG650) (ONNV)).